A 461-amino-acid polypeptide reads, in one-letter code: Anthocyanidin 3-O-glucoside 5-O-glucosyltransferase (461 aa).

An N-terminal signal peptide occupies residues methionine 1–glycine 15. Catalysis depends on histidine 16, which acts as the Proton acceptor. Position 16 (histidine 16) interacts with an anthocyanidin. UDP-alpha-D-glucose-binding residues include glutamine 338, histidine 353, tryptophan 356, asparagine 357, serine 358, glutamate 361, aspartate 377, and glutamine 378.

Belongs to the UDP-glycosyltransferase family.

The catalysed reaction is an anthocyanidin 3-O-beta-D-glucoside + UDP-alpha-D-glucose = an anthocyanidin 3,5-di-O-beta-D-glucoside + UDP + 2 H(+). The protein operates within pigment biosynthesis; anthocyanin biosynthesis. Its function is as follows. Catalyzes the glucosylation at the O-5 position of anthocyanidin 3-glucosides to form anthocyanidin 3,5-di-O-glucosides using UDP-glucose as sugar donor. Anthocyanidin 3,5-di-O-glucosides are molecules that are responsible for pigmentation. Also acts on anthocyanidin 3-O-(6-O-malonylglucoside). Much less active with hydroxycinnamoylglucose derivatives. No activity in the absence of the 3-O-glucoside group. This Verbena hybrida (Garden vervain) protein is Anthocyanidin 3-O-glucoside 5-O-glucosyltransferase (HGT8).